The following is a 186-amino-acid chain: Negative modulator of initiation of replication (186 aa).

The protein belongs to the SeqA family. Homodimer. Polymerizes to form helical filaments.

The protein resides in the cytoplasm. Functionally, negative regulator of replication initiation, which contributes to regulation of DNA replication and ensures that replication initiation occurs exactly once per chromosome per cell cycle. Binds to pairs of hemimethylated GATC sequences in the oriC region, thus preventing assembly of replication proteins and re-initiation at newly replicated origins. Repression is relieved when the region becomes fully methylated. This Haemophilus ducreyi (strain 35000HP / ATCC 700724) protein is Negative modulator of initiation of replication.